Here is a 401-residue protein sequence, read N- to C-terminus: Elongation factor Tu 1 (401 aa).

Residues 10 to 209 (KPHVNVGTIG…AVDEYIPTPV (200 aa)) form the tr-type G domain. The segment at 19–26 (GHVDHGKT) is G1. 19-26 (GHVDHGKT) is a GTP binding site. A Mg(2+)-binding site is contributed by Thr26. A G2 region spans residues 60–64 (GITIA). A G3 region spans residues 81–84 (DCPG). GTP contacts are provided by residues 81–85 (DCPGH) and 136–139 (NKVD). Residues 136-139 (NKVD) are G4. The tract at residues 174 to 176 (SAL) is G5.

Belongs to the TRAFAC class translation factor GTPase superfamily. Classic translation factor GTPase family. EF-Tu/EF-1A subfamily. Monomer.

Its subcellular location is the cytoplasm. It carries out the reaction GTP + H2O = GDP + phosphate + H(+). GTP hydrolase that promotes the GTP-dependent binding of aminoacyl-tRNA to the A-site of ribosomes during protein biosynthesis. This chain is Elongation factor Tu 1, found in Roseiflexus castenholzii (strain DSM 13941 / HLO8).